The chain runs to 315 residues: Adenine deaminase (315 aa).

Residues His-14, His-16, and His-194 each coordinate Zn(2+). The Proton donor role is filled by Glu-197. A Zn(2+)-binding site is contributed by Asp-275. A substrate-binding site is contributed by Asp-276.

Belongs to the metallo-dependent hydrolases superfamily. Adenosine and AMP deaminases family. Adenine deaminase type 2 subfamily. It depends on Zn(2+) as a cofactor.

The enzyme catalyses adenine + H2O + H(+) = hypoxanthine + NH4(+). Functionally, catalyzes the hydrolytic deamination of adenine to hypoxanthine. Plays an important role in the purine salvage pathway and in nitrogen catabolism. The polypeptide is Adenine deaminase (Pseudomonas putida (strain ATCC 47054 / DSM 6125 / CFBP 8728 / NCIMB 11950 / KT2440)).